A 1066-amino-acid polypeptide reads, in one-letter code: Microtubule-associated protein 1S (1066 aa).

The tract at residues 1–804 (MAATVAGSGA…SESLPTLSDS (804 aa)) is necessary for the microtubule-organizing center localization. Phosphoserine occurs at positions 320 and 472. A disordered region spans residues 462–707 (QDMAGPRRAE…EVDESLSVSF (246 aa)). Basic and acidic residues-rich tracts occupy residues 466-487 (GPRRAESKESVASRDSLRREGR) and 500-530 (GVARKDSPRTEAPRRAEKEARPSREVKKDPR). At Ser582 the chain carries Phosphoserine. Over residues 597–614 (ACSSPAPQLVATPSQESS) the composition is skewed to polar residues. Phosphothreonine is present on Thr647. Ser649, Ser660, Ser665, Ser667, Ser737, and Ser765 each carry phosphoserine. A compositionally biased stretch (low complexity) spans 656–671 (GPTESSGPLSLSPLRG). Positions 676–1066 (PDASPTVTTP…EAFPACKVEF (391 aa)) are necessary for interaction with RASSF1. Positions 720–973 (EAGLSLPLCG…GGSARLVDEE (254 aa)) are necessary for association with microtubules. The segment at 758–950 (PMAPAPVSPG…SRSGGSAAPP (193 aa)) is disordered. Composition is skewed to polar residues over residues 766–775 (PGSSNDSSAR) and 790–803 (PPTSVSESLPTLSD). The residue at position 816 (Ser816) is a Phosphoserine. Positions 832-845 (PDPLKIPPPLPTPP) are enriched in pro residues. Composition is skewed to low complexity over residues 880-894 (TTPPKATPVTAAKIK) and 933-949 (RGPSGSAGSRSGGSAAP). Residues 967-1066 (ARLVDEEFFR…EAFPACKVEF (100 aa)) are necessary for association with actin. Residues 974–998 (FFRRVRALCYVISGQDQHKEEGMRA) are necessary for the mitochondrial aggregation and genome destruction.

Belongs to the MAP1 family. Heterodimer of a heavy and a light chain. Interacts with microtubules and actin. Both MAP1S heavy and light chains interact with microtubules. MAP1S light chain interacts with actin. Interacts (via C-terminus) with GAN (via Kelch domains). Interacts with ESR1, LRPPRC, RASSF1, microtubules and VCY2. Interacts with ESR1, LRPPRC, RASSF1, microtubules and VCY2. Interacts with WDR47 (via N-terminus of light chain).

The protein resides in the nucleus. It localises to the cytoplasm. It is found in the cytosol. Its subcellular location is the cytoskeleton. The protein localises to the spindle. Functionally, microtubule-associated protein that mediates aggregation of mitochondria resulting in cell death and genomic destruction (MAGD). Plays a role in anchoring the microtubule organizing center to the centrosomes. Binds to DNA. Plays a role in apoptosis. Involved in the formation of microtubule bundles. The protein is Microtubule-associated protein 1S (MAP1S) of Bos taurus (Bovine).